A 782-amino-acid chain; its full sequence is Beta-mannosyltransferase 9 (782 aa).

Residues M1–S26 are Cytoplasmic-facing. The helical transmembrane segment at I27–V47 threads the bilayer. Residues Y48–N782 lie on the Extracellular side of the membrane. The interval K66 to Q96 is disordered. A compositionally biased stretch (basic and acidic residues) spans Q76–Q96. N445, N648, and N699 each carry an N-linked (GlcNAc...) asparagine glycan.

The protein belongs to the BMT family.

The protein resides in the membrane. Its function is as follows. Beta-mannosyltransferase involved in cell wall biosynthesis through beta-1,2-mannosylation of cell wall phosphopeptidomannan. This Candida albicans (strain SC5314 / ATCC MYA-2876) (Yeast) protein is Beta-mannosyltransferase 9 (BMT9).